The primary structure comprises 96 residues: Protein RnfH (96 aa).

The protein belongs to the UPF0125 (RnfH) family.

The protein is Protein RnfH of Shigella flexneri.